The sequence spans 336 residues: MFGKTDKMDVRCHSDTEAARVSKNAHKESREIKGAEGSLPAAFLKEPQGAFSASGASEDCNKSKSNSSADPDYCRRILVRDAKGSIREIILPKGLDLDRPKRTRTSFTAEQLYRLEMEFQRCQYVVGRERTELARQLNLSETQVKVWFQNRRTKQKKDQGKDSELRSVVSETAATCSVLRLLEQGRLLSPPGLPALLPPCATGALGSALRGPSLPALGAGAAAGSAAAAAAAATAPGPAGAASQHPPAVGGAPGPGPAGPGGLHAGAPTASHGLFSLPVPSLLGSVASRLSSAPLTMAGSLAGNLQELSARYLSSSAFEPYSRTNNKEGAEKKALD.

A compositionally biased stretch (basic and acidic residues) spans 1-34 (MFGKTDKMDVRCHSDTEAARVSKNAHKESREIKG). Disordered stretches follow at residues 1–39 (MFGK…EGSL) and 50–69 (AFSA…NSSA). Residues 100 to 159 (PKRTRTSFTAEQLYRLEMEFQRCQYVVGRERTELARQLNLSETQVKVWFQNRRTKQKKDQ) constitute a DNA-binding region (homeobox). The segment covering 236–250 (PGPAGAASQHPPAVG) has biased composition (low complexity). 2 disordered regions span residues 236–267 (PGPA…HAGA) and 316–336 (SAFE…KALD). The span at 325–336 (NNKEGAEKKALD) shows a compositional bias: basic and acidic residues.

It belongs to the EMX homeobox family.

The protein resides in the nucleus. Functionally, transcription factor that may function in dorsoventral specification of the forebrain. Required for axon guidance and major tract formation in the developing forebrain. May contribute to the differentiation of the neuroretina, pigmented epithelium and optic stalk. The chain is Ventral anterior homeobox 1 (Vax1) from Rattus norvegicus (Rat).